Here is a 459-residue protein sequence, read N- to C-terminus: MGKDKLHVNVVVIGHVDSGKSTTTGHLIYKCGGIDKRTIEKFEKEAQELGKSSFKYAWVLDKLKAERERGITIDIALWKFETPRYQVTVIDAPGHRDFIKNMITGTSQADCAILIIATGIGEFEAGISKDGQTREHALLAFTLGVRQLIVACNKMDTCKWSEDRFNEIVKETNGFIKKVGYNPKAVPFVPISGWHGDNMLEETTNMPWYKGWTKETKSGVSKGKTLLEAIDAIEPPTRPTDKPLRLPLQDVYKIGGIGTVPVGRVETGVIKAGMVVKFAPTNVTTEVKSVEMHHEQIPEGLPGDNVGFNVKNVSIKDIRRGNVCGDSKNDPPMEAASFNAQVIVLNHPGQIGAGYTPVLDCHTAHIACKFAELIEKIDRRTGKVMEAAPKFVKSGDAAIVKLVAQKPLCVETYADYPPLGRFAVRDMRQTVAVGVIKSVDKTEKGGKVTKAAEKAAKKK.

Position 2 is a n,N,N-trimethylglycine (Gly2). Lys3 bears the N6,N6-dimethyllysine; alternate mark. Residue Lys3 is modified to N6-methyllysine; alternate. A tr-type G domain is found at Lys5–Thr240. Residues Gly14 to Ser21 are G1. GTP is bound at residue Gly14–Ser21. The residue at position 30 (Lys30) is an N6-methyllysine. The segment at Gly70–Asp74 is G2. Lys79 is subject to N6,N6,N6-trimethyllysine. A G3 region spans residues Asp91 to Gly94. Residues Asp91–His95 and Asn153–Asp156 each bind GTP. The G4 stretch occupies residues Asn153–Asp156. The segment at Ser192–Trp194 is G5. N6,N6-dimethyllysine; alternate is present on Lys316. N6-methyllysine; alternate is present on Lys316. The residue at position 390 (Lys390) is an N6-methyllysine.

It belongs to the TRAFAC class translation factor GTPase superfamily. Classic translation factor GTPase family. EF-Tu/EF-1A subfamily.

It localises to the cytoplasm. Its function is as follows. This protein promotes the GTP-dependent binding of aminoacyl-tRNA to the A-site of ribosomes during protein biosynthesis. The protein is Elongation factor 1-alpha (TEF1) of Cryptococcus neoformans var. neoformans serotype D (strain B-3501A) (Filobasidiella neoformans).